A 2020-amino-acid chain; its full sequence is Metacaspase-2 (2020 aa).

2 stretches are compositionally biased toward basic and acidic residues: residues 51–60 and 69–78; these read SENDRNESIQ and DNRKTNKSEK. Disordered regions lie at residues 51–78 and 573–614; these read SEND…KSEK and RNGN…NINN. Residues 576–614 show a composition bias toward low complexity; the sequence is NINNNKNNNINNNNNNINNNNNNINNNNNNINNNNNINN.

It belongs to the peptidase C14B family.

Its subcellular location is the cytoplasm. Ca(2+) does not appear to affect catalytic activity. Protease that cleaves specifically after arginine or lysine residues. May play a role in parasite growth and/or development. This is Metacaspase-2 from Plasmodium falciparum (isolate 3D7).